The chain runs to 332 residues: Probable allantoicase (332 aa).

Belongs to the allantoicase family.

It carries out the reaction allantoate + H2O = (S)-ureidoglycolate + urea. It functions in the pathway nitrogen metabolism; (S)-allantoin degradation; (S)-ureidoglycolate from allantoate (aminidohydrolase route): step 1/1. This is Probable allantoicase from Pseudomonas paraeruginosa (strain DSM 24068 / PA7) (Pseudomonas aeruginosa (strain PA7)).